We begin with the raw amino-acid sequence, 519 residues long: Acetylcholine receptor subunit gamma (519 aa).

Residues 1 to 22 (MCGGQRPLFLLPLLAVCLGAKG) form the signal peptide. Residues 23–240 (RNQEERLLGD…VVFYLLIQRK (218 aa)) are Extracellular-facing. 2 N-linked (GlcNAc...) asparagine glycosylation sites follow: asparagine 52 and asparagine 163. An intrachain disulfide couples cysteine 150 to cysteine 164. A run of 3 helical transmembrane segments spans residues 241-265 (PLFY…IYFL), 274-292 (CTVA…FLVA), and 308-329 (YLTF…VLNV). Topologically, residues 330-476 (SLRSPHTHSM…WFLVGRVLDR (147 aa)) are cytoplasmic. The chain crosses the membrane as a helical span at residues 477 to 497 (VCFLAMLSLFVCGTAGIFLMA).

The protein belongs to the ligand-gated ion channel (TC 1.A.9) family. Acetylcholine receptor (TC 1.A.9.1) subfamily. Gamma/CHRNG sub-subfamily. As to quaternary structure, pentamer of two alpha chains, and one each of the beta, delta, and gamma (in immature muscle) or epsilon (in mature muscle) chains.

It localises to the postsynaptic cell membrane. It is found in the cell membrane. The enzyme catalyses K(+)(in) = K(+)(out). It carries out the reaction Na(+)(in) = Na(+)(out). Functionally, after binding acetylcholine, the AChR responds by an extensive change in conformation that affects all subunits and leads to opening of an ion-conducting channel across the plasma membrane. The chain is Acetylcholine receptor subunit gamma (CHRNG) from Bos taurus (Bovine).